Reading from the N-terminus, the 212-residue chain is Deoxyribose-phosphate aldolase (212 aa).

Residue Asp-89 is the Proton donor/acceptor of the active site. Lys-151 serves as the catalytic Schiff-base intermediate with acetaldehyde. Lys-180 serves as the catalytic Proton donor/acceptor.

Belongs to the DeoC/FbaB aldolase family. DeoC type 1 subfamily.

It is found in the cytoplasm. The catalysed reaction is 2-deoxy-D-ribose 5-phosphate = D-glyceraldehyde 3-phosphate + acetaldehyde. The protein operates within carbohydrate degradation; 2-deoxy-D-ribose 1-phosphate degradation; D-glyceraldehyde 3-phosphate and acetaldehyde from 2-deoxy-alpha-D-ribose 1-phosphate: step 2/2. Functionally, catalyzes a reversible aldol reaction between acetaldehyde and D-glyceraldehyde 3-phosphate to generate 2-deoxy-D-ribose 5-phosphate. This chain is Deoxyribose-phosphate aldolase, found in Clostridium botulinum (strain Loch Maree / Type A3).